Reading from the N-terminus, the 79-residue chain is ATP synthase subunit c (79 aa).

Helical transmembrane passes span 11–31 and 53–73; these read MAAA…IGIL and FFIV…LGLY.

This sequence belongs to the ATPase C chain family. In terms of assembly, F-type ATPases have 2 components, F(1) - the catalytic core - and F(0) - the membrane proton channel. F(1) has five subunits: alpha(3), beta(3), gamma(1), delta(1), epsilon(1). F(0) has three main subunits: a(1), b(2) and c(10-14). The alpha and beta chains form an alternating ring which encloses part of the gamma chain. F(1) is attached to F(0) by a central stalk formed by the gamma and epsilon chains, while a peripheral stalk is formed by the delta and b chains.

It localises to the cell inner membrane. In terms of biological role, f(1)F(0) ATP synthase produces ATP from ADP in the presence of a proton or sodium gradient. F-type ATPases consist of two structural domains, F(1) containing the extramembraneous catalytic core and F(0) containing the membrane proton channel, linked together by a central stalk and a peripheral stalk. During catalysis, ATP synthesis in the catalytic domain of F(1) is coupled via a rotary mechanism of the central stalk subunits to proton translocation. Its function is as follows. Key component of the F(0) channel; it plays a direct role in translocation across the membrane. A homomeric c-ring of between 10-14 subunits forms the central stalk rotor element with the F(1) delta and epsilon subunits. The sequence is that of ATP synthase subunit c from Citrobacter koseri (strain ATCC BAA-895 / CDC 4225-83 / SGSC4696).